The sequence spans 136 residues: Psoriasis susceptibility 1 candidate gene 2 protein (136 aa).

A signal peptide spans 1-22 (MILNWKLLGILVLCLHTRGISG). The tract at residues 20-136 (ISGSEGHPSH…DLDPPREEYR (117 aa)) is disordered. Composition is skewed to pro residues over residues 44 to 69 (PQGP…PTRP) and 84 to 116 (PEPP…PPAP). Basic and acidic residues predominate over residues 118–136 (VDNRPQEEPDLDPPREEYR).

In terms of tissue distribution, expressed in skin. Also expressed in heart and skeletal muscle.

Its subcellular location is the secreted. The chain is Psoriasis susceptibility 1 candidate gene 2 protein (PSORS1C2) from Homo sapiens (Human).